A 429-amino-acid polypeptide reads, in one-letter code: Histidine--tRNA ligase (429 aa).

This sequence belongs to the class-II aminoacyl-tRNA synthetase family. As to quaternary structure, homodimer.

The protein resides in the cytoplasm. The enzyme catalyses tRNA(His) + L-histidine + ATP = L-histidyl-tRNA(His) + AMP + diphosphate + H(+). This chain is Histidine--tRNA ligase, found in Streptococcus mutans serotype c (strain ATCC 700610 / UA159).